We begin with the raw amino-acid sequence, 356 residues long: Nucleosome assembly protein 1;4 (356 aa).

A coiled-coil region spans residues 34 to 88; sequence VNALKNKLQNLAGQHSDILETLTPQVRKRVDVLRELQSQHDELESHFFEERAALE. A Nuclear export signal motif is present at residues 55-70; that stretch reads LTPQVRKRVDVLRELQ. Positions 230–235 match the Nuclear localization signal motif; it reads KKKPKK. Residues 304 to 356 are disordered; that stretch reads FTGEAAEGDEFEDIEDDDDDDDDDDDEDDEDEEDEDDEEEEKSKKKSSALKVE. The segment covering 309-343 has biased composition (acidic residues); that stretch reads AEGDEFEDIEDDDDDDDDDDDEDDEDEEDEDDEEE. Basic residues predominate over residues 347–356; sequence KKKSSALKVE.

This sequence belongs to the nucleosome assembly protein (NAP) family. In terms of assembly, can form homomeric and heteromeric protein complexes with NAP1;3. Binds histones H2A and H2B in vivo. Also able to bind histones H1 and H4 in vitro. Interacts with CYCB1;1 and with alpha tubulin.

Its subcellular location is the nucleus. The protein resides in the cytoplasm. May modulate chromatin structure by regulation of nucleosome assembly/disassembly. Could function together with B-type cyclins in the regulation of microtubule dynamics. This Nicotiana tabacum (Common tobacco) protein is Nucleosome assembly protein 1;4 (NAP1;4).